The chain runs to 1345 residues: MASDVTQLLPGIPYRHENQELRVYYADSEFSPAEGRFVFNYTGRAGDLTLLRGRSDAEHLLVVILRNGSGDEDLRPLHAPELRLLHFILAPEVRYSHLDPRSRLEGGGDRSLTFDYGPALYRRVSTDAFELGRVLTLIDCRSLLRVELGRHFVTRLAQYIGEDEMRVVHEALVNDTSVQRWTLGGAAQRGEVPATALTPAAEGGAFVMRDPVSIYLMLPRPDNAMPLGIQASTAASPLVRQYIILTTPGTMSVFPWGSVPKNPSVREAVTHLHSEATSMGQPQLQGQVFQLSLLPFYRVSGAACGVYSVTPSVASGYEDAVHGEIRETHEAHARCLNHSGVPVTCGFLRTFDETSAPLSLNTLVCTSTLATCPVSMLTTSRFMRGQYIVALGDFLPVGGPDAPPYVYRSSSFLCNTIVNTLNMFGKTRARICISGTSRQVGFASTHAHLGSLLPRGGAVLYLSKLPQEALSQIRGRGVSREDLRELVNRFYLRVSSHQVFLVLKDEPVGDQGRQGYQFLQKAAGLNGCAFRVLGRTCDQEGLHFVDDLGEGGGGEVPPRRMGYSPEGAAFSLPFESPVKKTTREYAEGVDVQRGMTLVQEGALEWDMFTPYATVHAVLSHPTVASKEYFVRRVDRFSNGLVRQQQGVGALDLPLADYCLVVDPAVETFTGTSFSREAHEASAPLENISVQEALELADAPERWFDSNGGAAARRPVPGHVLACGEQGYKMINSGVLGGQYGITEVVTNIMLGPAFELAQLQITAAVHWNEGPDYRAQLERAVMACREFCAELGVGLAFSSGCSSAKYGGPSHSPPGPDSLNLISFAGKARVDTSAPRLTPELHGPGHVLIHLSVNREVLVAGSVFEHKMTGLRHPLPPVEAHRVRNMFQCVQALVARGLVTAGHDVSDGGLIACCAEMALAGQCGVTLDIQRGIHPLLVLFSETPGAVLEVPLGNLAGVLEACEPFGCFVNQIGTVEPRTGEGHVVVTQGGSVVFRDSLANVMNSWTSFADEQFSRFGACLKEAEMYRKDYGDNELDAGSLEDACAGGELTLYRSPGRRVGAAVLCLPGCTEPLAALHALVNSGFEVSVVGPEDLASSRDGLGAFAGLVVSGVTGARANYAASRGLVQGLVAERAARETVLVFLNRTGTFSLGLGELGMEFLCAFGVFDGAAAGGGGEGGGEVGRGLTDQSFGNRLIELEANASELPESLWLNFRVPWNTRSVALRHLAGNILPCWAYGTHLGVRYRADGLEYSLDALGMIALHYHGRRAQDWNFARNYPRNPTAVSTVAGLCSRDGRHLGLLCDPSAAYHPWQWQHVPRRVAGLRTSPWAVLFHTLFLDTLKSMS.

The protein localises to the virion tegument. The sequence is that of Probable membrane antigen 75 (75) from Equine herpesvirus 2 (strain 86/87) (EHV-2).